The primary structure comprises 388 residues: LL-diaminopimelate aminotransferase (388 aa).

The substrate site is built by tyrosine 16 and glycine 41. Residues tyrosine 70, 104 to 105 (SK), tyrosine 129, asparagine 179, tyrosine 210, and 239 to 241 (SLS) contribute to the pyridoxal 5'-phosphate site. Substrate contacts are provided by lysine 105, tyrosine 129, and asparagine 179. Lysine 242 is subject to N6-(pyridoxal phosphate)lysine. Position 250 (arginine 250) interacts with pyridoxal 5'-phosphate. Arginine 368 provides a ligand contact to substrate.

The protein belongs to the class-I pyridoxal-phosphate-dependent aminotransferase family. LL-diaminopimelate aminotransferase subfamily. In terms of assembly, homodimer. Pyridoxal 5'-phosphate serves as cofactor.

It catalyses the reaction (2S,6S)-2,6-diaminopimelate + 2-oxoglutarate = (S)-2,3,4,5-tetrahydrodipicolinate + L-glutamate + H2O + H(+). Its pathway is amino-acid biosynthesis; L-lysine biosynthesis via DAP pathway; LL-2,6-diaminopimelate from (S)-tetrahydrodipicolinate (aminotransferase route): step 1/1. Functionally, involved in the synthesis of meso-diaminopimelate (m-DAP or DL-DAP), required for both lysine and peptidoglycan biosynthesis. Catalyzes the direct conversion of tetrahydrodipicolinate to LL-diaminopimelate. In Oleidesulfovibrio alaskensis (strain ATCC BAA-1058 / DSM 17464 / G20) (Desulfovibrio alaskensis), this protein is LL-diaminopimelate aminotransferase.